The chain runs to 289 residues: Arabinogalactan O-methyltransferase 1 (289 aa).

A helical membrane pass occupies residues 12–32; it reads IITGVLLAGLVGGALLFTSFI.

This sequence belongs to the methyltransferase superfamily. Binds to the translation initiation factors TIF3E1.

The protein resides in the golgi apparatus membrane. In terms of biological role, involved in the methylation of glucuronic acid of different plant cell wall component, but mainly on side chains of arabinogalactans. The sequence is that of Arabinogalactan O-methyltransferase 1 (AGM1) from Arabidopsis thaliana (Mouse-ear cress).